A 748-amino-acid polypeptide reads, in one-letter code: CCR4-NOT transcription complex subunit 10-B (748 aa).

The span at 1-16 (MAADKAGEQGAEKHEG) shows a compositional bias: basic and acidic residues. 3 disordered regions span residues 1-25 (MAAD…GISD), 483-524 (KQEN…PPSS), and 605-634 (VSLG…KQIP). 2 stretches are compositionally biased toward polar residues: residues 487–509 (GSKA…VCSN) and 605–615 (VSLGVSSNEQE).

This sequence belongs to the CNOT10 family. As to quaternary structure, component of the CCR4-NOT complex. cnot10 and cnot11 form a subcomplex docked to the cnot1 scaffold.

Its subcellular location is the cytoplasm. It localises to the nucleus. In terms of biological role, component of the CCR4-NOT complex which is one of the major cellular mRNA deadenylases and is linked to various cellular processes including bulk mRNA degradation, miRNA-mediated repression, translational repression during translational initiation and general transcription regulation. Additional complex functions may be a consequence of its influence on mRNA expression. Is not required for association of CNOT7 to the CCR4-NOT complex. The polypeptide is CCR4-NOT transcription complex subunit 10-B (cnot10-b) (Xenopus laevis (African clawed frog)).